Consider the following 318-residue polypeptide: MTGRQRTTVVAPDRPVQDATISQLTTRVWTVAIDGYRTIVVEGETGIVAINSFGTPSAQTKYRELITQTFGDKPVVAVVASIDHLDHTGRLGPFANGAEVIGHELGQAIAFGRGLPEQKLADTVVTGPVTEIERAGVRLVLRYPAPTVGTGNLAVDLPDDDVVFMVGLQSGARYGIFPDFHFKHFLRATSEIAALGRRYFVPGRSEVMDAGQVRQALEYVNDFQNACQRCLAGGEVPHWLLEPTTAYLHDELSSKWSHLEGYDPVAVGLGGLRVVCHYYMGGWWLDDTDHHELLYDHLTVRTYREYRERLATAGTGRA.

This sequence belongs to the metallo-beta-lactamase superfamily. As to quaternary structure, part of the complex DnhAB composed of the 2,4-dinitroanisole O-demethylase alpha (DnhA) and beta (DnhB) subunits.

The catalysed reaction is 2,4-dinitroanisole + H2O = 2,4-dinitrophenol + methanol + H(+). Functionally, involved in the degradation of 2,4-dinitroanisole (DNAN), an insensitive munition ingredient used in explosive formulations as a replacement for 2,4,6-trinitrotoluene (TNT). Catalyzes the removal of the methyl group from 2,4-dinitroanisole (DNAN) to yield 2,4-dinitrophenol (2,4-DNP) and methanol. This chain is 2,4-dinitroanisole O-demethylase subunit beta, found in Nocardioides sp. (strain JS1661).